The primary structure comprises 427 residues: Peptidase B (427 aa).

Mn(2+)-binding residues include K195 and D200. K207 is an active-site residue. Mn(2+) contacts are provided by D218, D277, and E279. R281 is a catalytic residue.

This sequence belongs to the peptidase M17 family. As to quaternary structure, homohexamer. It depends on Mn(2+) as a cofactor.

Its subcellular location is the cytoplasm. It carries out the reaction Release of an N-terminal amino acid, Xaa, from a peptide or arylamide. Xaa is preferably Glu or Asp but may be other amino acids, including Leu, Met, His, Cys and Gln.. In terms of biological role, probably plays an important role in intracellular peptide degradation. The protein is Peptidase B of Salmonella dublin (strain CT_02021853).